The sequence spans 339 residues: MIFIDACFKKETPYTPIWMMRQAGRYLSEYQESRKKAGSFLELCKNSDLATEVTLQPVEILGVDAAILFSDILVVPLEMGLDLEFIPKKGPHFLETITDLKSVDSLKVGAYKRLNYVYDTISQTRQKLSKDKALIGFCGSPWTLATYMIESEGSKSYAKSKKMLYSEPEVLHTLLEKLSAELIEYLSLQIQAGVNAVMIFDSWANALEKEAYLKFSWDYLKKISKELKKRYARIPVILFPKGVGAYLDSIDGEFDVFGVDWGTPLEMAKKILGDKYVLQGNLEPTRLYDKNALEEGVEKILKIMGNKGHIFNLGHGMLPDLPRENAKYLVQLVHNKTKH.

Residues 21–25 (RQAGR), Asp71, Tyr147, Ser202, and His315 each bind substrate.

It belongs to the uroporphyrinogen decarboxylase family. In terms of assembly, homodimer.

The protein resides in the cytoplasm. It catalyses the reaction uroporphyrinogen III + 4 H(+) = coproporphyrinogen III + 4 CO2. It participates in porphyrin-containing compound metabolism; protoporphyrin-IX biosynthesis; coproporphyrinogen-III from 5-aminolevulinate: step 4/4. In terms of biological role, catalyzes the decarboxylation of four acetate groups of uroporphyrinogen-III to yield coproporphyrinogen-III. The protein is Uroporphyrinogen decarboxylase of Helicobacter acinonychis (strain Sheeba).